We begin with the raw amino-acid sequence, 363 residues long: Cytochrome b (363 aa).

Transmembrane regions (helical) follow at residues 23-43, 67-89, 102-122, and 164-184; these read VGFILGILLILQILSGLLLTF, WFVRLYHSVGVSFYFFFMFIHII, SWYSGIVILILSIVIAFTGYV, and FFILHFVLPAVVLVIVLLHLY. Heme b contacts are provided by His73 and His87. Heme b contacts are provided by His168 and His182. An a ubiquinone-binding site is contributed by His187. 4 consecutive transmembrane segments (helical) span residues 210–230, 271–291, 309–329, and 332–352; these read ILFSDVKFLVIISMFIGPQVG, VFPTKVSGLVAMVVVLKLLII, RVWTTTSVPLVPALFLLGCIG, and VINLDLIIIGIYGVLLSTTFV.

Belongs to the cytochrome b family. In terms of assembly, the main subunits of complex b-c1 are: cytochrome b, cytochrome c1 and the Rieske protein. Requires heme b as cofactor.

Its subcellular location is the mitochondrion inner membrane. Functionally, component of the ubiquinol-cytochrome c reductase complex (complex III or cytochrome b-c1 complex) that is part of the mitochondrial respiratory chain. The b-c1 complex mediates electron transfer from ubiquinol to cytochrome c. Contributes to the generation of a proton gradient across the mitochondrial membrane that is then used for ATP synthesis. The chain is Cytochrome b (MT-CYB) from Theileria parva (East coast fever infection agent).